A 446-amino-acid polypeptide reads, in one-letter code: Glutamyl-tRNA reductase (446 aa).

Residues 49–52 (TCNR), serine 109, 114–116 (ETQ), and glutamine 120 contribute to the substrate site. The active-site Nucleophile is cysteine 50. NADP(+) is bound at residue 189–194 (GAGETG).

Belongs to the glutamyl-tRNA reductase family. Homodimer.

The enzyme catalyses (S)-4-amino-5-oxopentanoate + tRNA(Glu) + NADP(+) = L-glutamyl-tRNA(Glu) + NADPH + H(+). It functions in the pathway porphyrin-containing compound metabolism; protoporphyrin-IX biosynthesis; 5-aminolevulinate from L-glutamyl-tRNA(Glu): step 1/2. Catalyzes the NADPH-dependent reduction of glutamyl-tRNA(Glu) to glutamate 1-semialdehyde (GSA). The protein is Glutamyl-tRNA reductase of Exiguobacterium sibiricum (strain DSM 17290 / CCUG 55495 / CIP 109462 / JCM 13490 / 255-15).